Here is a 118-residue protein sequence, read N- to C-terminus: Small ribosomal subunit protein uS13 (118 aa).

The segment at 94–118 (SLPLRGQRTKTNARTRKGPRKPIRK) is disordered.

The protein belongs to the universal ribosomal protein uS13 family. In terms of assembly, part of the 30S ribosomal subunit. Forms a loose heterodimer with protein S19. Forms two bridges to the 50S subunit in the 70S ribosome.

Functionally, located at the top of the head of the 30S subunit, it contacts several helices of the 16S rRNA. In the 70S ribosome it contacts the 23S rRNA (bridge B1a) and protein L5 of the 50S subunit (bridge B1b), connecting the 2 subunits; these bridges are implicated in subunit movement. Contacts the tRNAs in the A and P-sites. The chain is Small ribosomal subunit protein uS13 from Shewanella frigidimarina (strain NCIMB 400).